A 119-amino-acid polypeptide reads, in one-letter code: Ribonuclease P protein component (119 aa).

The protein belongs to the RnpA family. As to quaternary structure, consists of a catalytic RNA component (M1 or rnpB) and a protein subunit.

It catalyses the reaction Endonucleolytic cleavage of RNA, removing 5'-extranucleotides from tRNA precursor.. Its function is as follows. RNaseP catalyzes the removal of the 5'-leader sequence from pre-tRNA to produce the mature 5'-terminus. It can also cleave other RNA substrates such as 4.5S RNA. The protein component plays an auxiliary but essential role in vivo by binding to the 5'-leader sequence and broadening the substrate specificity of the ribozyme. The polypeptide is Ribonuclease P protein component (Klebsiella pneumoniae (strain 342)).